We begin with the raw amino-acid sequence, 335 residues long: Phosphatidylglycerol--prolipoprotein diacylglyceryl transferase (335 aa).

3 helical membrane passes run 31–51, 67–87, and 100–120; these read IYWY…TYSL, YIFL…LAIG, and LAIQ…FPLI. R163 contributes to the a 1,2-diacyl-sn-glycero-3-phospho-(1'-sn-glycerol) binding site. The next 3 membrane-spanning stretches (helical) occupy residues 213–233, 235–255, and 277–297; these read PLFL…YFGL, YIKQ…YGVT, and SLLL…APLL.

It belongs to the Lgt family.

The protein localises to the cell membrane. The enzyme catalyses L-cysteinyl-[prolipoprotein] + a 1,2-diacyl-sn-glycero-3-phospho-(1'-sn-glycerol) = an S-1,2-diacyl-sn-glyceryl-L-cysteinyl-[prolipoprotein] + sn-glycerol 1-phosphate + H(+). Its pathway is protein modification; lipoprotein biosynthesis (diacylglyceryl transfer). In terms of biological role, catalyzes the transfer of the diacylglyceryl group from phosphatidylglycerol to the sulfhydryl group of the N-terminal cysteine of a prolipoprotein, the first step in the formation of mature lipoproteins. The sequence is that of Phosphatidylglycerol--prolipoprotein diacylglyceryl transferase from Ureaplasma parvum serovar 3 (strain ATCC 27815 / 27 / NCTC 11736).